We begin with the raw amino-acid sequence, 344 residues long: Tetraacyldisaccharide 4'-kinase (344 aa).

Position 65–72 (65–72 (HAGGTGKT)) interacts with ATP.

Belongs to the LpxK family.

The catalysed reaction is a lipid A disaccharide + ATP = a lipid IVA + ADP + H(+). The protein operates within glycolipid biosynthesis; lipid IV(A) biosynthesis; lipid IV(A) from (3R)-3-hydroxytetradecanoyl-[acyl-carrier-protein] and UDP-N-acetyl-alpha-D-glucosamine: step 6/6. Transfers the gamma-phosphate of ATP to the 4'-position of a tetraacyldisaccharide 1-phosphate intermediate (termed DS-1-P) to form tetraacyldisaccharide 1,4'-bis-phosphate (lipid IVA). The polypeptide is Tetraacyldisaccharide 4'-kinase (Neisseria meningitidis serogroup C / serotype 2a (strain ATCC 700532 / DSM 15464 / FAM18)).